Consider the following 155-residue polypeptide: Ribosome maturation factor RimP (155 aa).

The protein belongs to the RimP family.

The protein localises to the cytoplasm. Required for maturation of 30S ribosomal subunits. This Staphylococcus epidermidis (strain ATCC 35984 / DSM 28319 / BCRC 17069 / CCUG 31568 / BM 3577 / RP62A) protein is Ribosome maturation factor RimP.